The following is a 125-amino-acid chain: Probable 4-amino-4-deoxy-L-arabinose-phosphoundecaprenol flippase subunit ArnF (125 aa).

Topologically, residues 1–2 are cytoplasmic; it reads MG. Residues 3–23 traverse the membrane as a helical segment; it reads VMWGLISVAIASLAQLSLGFA. Residues 24–33 are Periplasmic-facing; the sequence is MMRLPSIAHP. A helical membrane pass occupies residues 34 to 54; that stretch reads LAFISGLGALNAATLALFAGL. Topologically, residues 55-76 are cytoplasmic; that stretch reads AGYLVSVFCWHKTLHTLALSKA. The helical transmembrane segment at 77 to 97 threads the bilayer; the sequence is YALLSLSYVLVWVASMLLPGL. Residues 98–100 are Periplasmic-facing; it reads QGA. Residues 101 to 121 traverse the membrane as a helical segment; the sequence is FSLKAMLGVLCIMAGVMLIFL. Over 122–125 the chain is Cytoplasmic; that stretch reads PARS.

This sequence belongs to the ArnF family. Heterodimer of ArnE and ArnF.

It localises to the cell inner membrane. It functions in the pathway bacterial outer membrane biogenesis; lipopolysaccharide biosynthesis. Functionally, translocates 4-amino-4-deoxy-L-arabinose-phosphoundecaprenol (alpha-L-Ara4N-phosphoundecaprenol) from the cytoplasmic to the periplasmic side of the inner membrane. In Salmonella agona (strain SL483), this protein is Probable 4-amino-4-deoxy-L-arabinose-phosphoundecaprenol flippase subunit ArnF.